We begin with the raw amino-acid sequence, 158 residues long: Scytalone dehydratase-like protein CPUR_05428 (158 aa).

Residues Tyr-24 and Tyr-44 each coordinate substrate. Residues His-79 and His-104 contribute to the active site.

Belongs to the scytalone dehydratase family.

Its pathway is pigment biosynthesis. In terms of biological role, scytalone dehydratase-like protein; part of the ergochrome gene cluster responsible for the typical purple-black color of the ergot sclerotia. The ergochrome gene cluster produces several ergot pigments including the yellow ergochrome secalonic acid and its derivatives, as well as the red anthraquinones endocrocin and clavorubin. The pathway begins with the synthesis of atrochrysone thioester by the polyketide synthase (PKS) CPUR_05437. The atrochrysone carboxyl ACP thioesterase CPUR_05436 then breaks the thioester bond and releases the atrochrysone carboxylic acid from CPUR_05437. The atrochrysone carboxylic acid is then converted to atrochrysone which is further transformed into emodin anthrone. The next step is performed by the anthrone oxygenase CPUR_05434 that catalyzes the oxidation of emodinanthrone to emodin. Emodin is further modified to yield monodictyphenone via several steps involving CPUR_05427, CPUR_05428, CPUR_05429 and CPUR_05430. The short chain dehydrogenase/reductase CPUR_05418 then catalyzes the C-5 ketoreduction to give the xanthone skeleton of the monomeric units. Ergochromes formation requires further dimerization steps of different xanthone units, probably catalyzed by the cytochrome P450 monooxygenase CPUR_05419. CPUR_05425, CPUR_05426 and CPUR_05431 are unique to Claviceps, thus it is likely that they are involved in further modification of xanthone units or in their dimerization. The yellow ergochromes and the red anthraquinone pigments endocrocin and clavorubin are products from the same PKS derived precursors and the latter are likely shunt products in the pathway of xanthone biosynthesis. It is proposed that atrochrysone carboxylic acid released from the PKS CPUR_05437 can also be converted to endocrocin anthrone which is further oxidized into endocrocin by CPUR_05435. Endocrocin could be then modified to clavorubin, possibly by CPUR_05423 and CPUR_05431. Clavorubin is the principal anthraquinone metabolite produced by the cluster with a much higher yield compared to endocrocin. This Claviceps purpurea (strain 20.1) (Ergot fungus) protein is Scytalone dehydratase-like protein CPUR_05428.